We begin with the raw amino-acid sequence, 219 residues long: RNA chaperone ProQ (219 aa).

The segment at 102-160 (TLKESQDKAKAKRAERSKDEGDAADKAPRKPKRKPQPQARRDAKPAAKDKPKAAPKAPA) is disordered. Composition is skewed to basic and acidic residues over residues 105-129 (ESQD…DKAP) and 140-153 (ARRD…DKPK).

It belongs to the ProQ family.

It localises to the cytoplasm. In terms of biological role, RNA chaperone with significant RNA binding, RNA strand exchange and RNA duplexing activities. This chain is RNA chaperone ProQ, found in Shewanella amazonensis (strain ATCC BAA-1098 / SB2B).